The following is a 171-amino-acid chain: Large ribosomal subunit protein uL10 (171 aa).

Belongs to the universal ribosomal protein uL10 family. As to quaternary structure, part of the ribosomal stalk of the 50S ribosomal subunit. The N-terminus interacts with L11 and the large rRNA to form the base of the stalk. The C-terminus forms an elongated spine to which L12 dimers bind in a sequential fashion forming a multimeric L10(L12)X complex.

Forms part of the ribosomal stalk, playing a central role in the interaction of the ribosome with GTP-bound translation factors. The sequence is that of Large ribosomal subunit protein uL10 from Methylocella silvestris (strain DSM 15510 / CIP 108128 / LMG 27833 / NCIMB 13906 / BL2).